The primary structure comprises 249 residues: Acetylglutamate kinase (249 aa).

Substrate contacts are provided by residues 38 to 39, R60, and N147; that span reads GG.

It belongs to the acetylglutamate kinase family. ArgB subfamily.

It localises to the cytoplasm. It carries out the reaction N-acetyl-L-glutamate + ATP = N-acetyl-L-glutamyl 5-phosphate + ADP. It participates in amino-acid biosynthesis; L-arginine biosynthesis; N(2)-acetyl-L-ornithine from L-glutamate: step 2/4. Catalyzes the ATP-dependent phosphorylation of N-acetyl-L-glutamate. This Deinococcus geothermalis (strain DSM 11300 / CIP 105573 / AG-3a) protein is Acetylglutamate kinase.